Here is a 542-residue protein sequence, read N- to C-terminus: Pre-mRNA-splicing factor 38B (542 aa).

Polar residues predominate over residues 1–12 (MANNSPALTGNS). Residues 1–41 (MANNSPALTGNSQPQHQAAAAVTQQQQQCGGGGGATKPAVS) are disordered. Ala2 carries the N-acetylalanine modification. Ser5 carries the phosphoserine modification. Residues 13-28 (QPQHQAAAAVTQQQQQ) show a composition bias toward low complexity. N6-acetyllysine is present on Lys228. Residues 233–542 (QIKTRPRKIK…KEHKSKDETV (310 aa)) are disordered. Residues 244–256 (DGKEGIEEIDRHV) are compositionally biased toward basic and acidic residues. The span at 257–285 (ERRRSRSPRRSLSPRRSPRRSRSRSHHRE) shows a compositional bias: basic residues. A phosphoserine mark is found at Ser289, Ser291, Ser319, and Ser321. A compositionally biased stretch (basic and acidic residues) spans 292-328 (FDRELEREKERQRLEREAKEREKERRRSRSIDRGLDR). The stretch at 293–322 (DRELEREKERQRLEREAKEREKERRRSRSI) forms a coiled coil. Residues 329 to 345 (RRSRSRERHRSRSRSRD) are compositionally biased toward basic residues. Residues 346–419 (RKGDRRDRDR…DRRHRDDKKE (74 aa)) are compositionally biased toward basic and acidic residues. Basic residues predominate over residues 420–447 (SKKKHSRSRSRERKHRSRSRNAGKRSRS). Ser445 bears the Phosphoserine mark. Residues 448–465 (RSKDKSSRHKNESKEKAN) are compositionally biased toward basic and acidic residues. Phosphoserine is present on residues Ser470, Ser472, and Ser478. Composition is skewed to basic and acidic residues over residues 478 to 491 (SVEK…PSRE) and 498 to 520 (RSQD…RQDH). Residues Ser523, Ser525, and Ser530 each carry the phosphoserine modification. Positions 530–542 (SQEKEHKSKDETV) are enriched in basic and acidic residues.

It belongs to the PRP38 family.

It localises to the nucleus. Functionally, may be required for pre-mRNA splicing. This is Pre-mRNA-splicing factor 38B (Prpf38b) from Mus musculus (Mouse).